The chain runs to 351 residues: Actin maturation protease (351 aa).

The span at 1–19 (MTSPCSPPLKPPISPPKTP) shows a compositional bias: pro residues. Residues 1 to 70 (MTSPCSPPLK…PPAATGPAPR (70 aa)) form a disordered region. The span at 36 to 50 (LDFSALPSPPWSQQT) shows a compositional bias: low complexity. Pro residues predominate over residues 51–64 (PVPPPLPLPPPPAA). A peptidase C39-like region spans residues 124 to 244 (SLIQEGPQCG…WAVSAGVLLG (121 aa)). Residue C132 is part of the active site. A Phosphoserine modification is found at S316.

Belongs to the ACTMAP family. Interacts (via N-terminus) with PFN2 isoforms IIa and IIb; the interactions may facilitate efficient cleavage of the acetylated N-terminus of immature actin. Interacts with PFN1.

Its subcellular location is the cytoplasm. The catalysed reaction is N-terminal N(alpha)-acetyl-L-methionyl-L-aspartyl-[protein] + H2O = N-terminal L-aspartyl-[protein] + N-acetyl-L-methionine. It catalyses the reaction N-terminal N(alpha)-acetyl-L-methionyl-L-glutamyl-[protein] + H2O = N-terminal L-glutamyl-[protein] + N-acetyl-L-methionine. The enzyme catalyses N-terminal N(alpha)-acetyl-L-cysteinyl-L-aspartyl-[protein] + H2O = N-terminal L-aspartyl-[protein] + N-acetyl-L-cysteine. It carries out the reaction N-terminal N(alpha)-acetyl-L-cysteinyl-L-glutamyl-[protein] + H2O = N-terminal L-glutamyl-[protein] + N-acetyl-L-cysteine. Actin maturation protease that specifically mediates the cleavage of immature acetylated N-terminal actin, thereby contributing to actin maturation. Cleaves N-terminal acetylated methionine of immature cytoplasmic beta- and gamma-actins ACTB and ACTG1 after translation. Cleaves N-terminal acetylated cysteine of muscle alpha-actins ACTA1, ACTC1 and ACTA2 after canonical removal of N-terminal methionine. The sequence is that of Actin maturation protease from Homo sapiens (Human).